The sequence spans 300 residues: Ribonuclease HIII (300 aa).

An RNase H type-2 domain is found at 83-300 (IPIIGSDEVG…THKAQALLTK (218 aa)). Residues aspartate 89, glutamate 90, and aspartate 194 each coordinate a divalent metal cation.

Belongs to the RNase HII family. RnhC subfamily. Mn(2+) is required as a cofactor. It depends on Mg(2+) as a cofactor.

The protein localises to the cytoplasm. The enzyme catalyses Endonucleolytic cleavage to 5'-phosphomonoester.. Functionally, endonuclease that specifically degrades the RNA of RNA-DNA hybrids. This is Ribonuclease HIII from Streptococcus pyogenes serotype M3 (strain ATCC BAA-595 / MGAS315).